The sequence spans 607 residues: Chaperone protein HtpG (607 aa).

Residues Met-1–Arg-323 are a; substrate-binding. The tract at residues Glu-324–Lys-534 is b. Residues Thr-535–Lys-607 form a c region.

The protein belongs to the heat shock protein 90 family. Homodimer.

It is found in the cytoplasm. In terms of biological role, molecular chaperone. Has ATPase activity. The protein is Chaperone protein HtpG of Fusobacterium nucleatum subsp. nucleatum (strain ATCC 25586 / DSM 15643 / BCRC 10681 / CIP 101130 / JCM 8532 / KCTC 2640 / LMG 13131 / VPI 4355).